A 703-amino-acid polypeptide reads, in one-letter code: Probable boron transporter 2 (703 aa).

Over methionine 1–arginine 35 the chain is Cytoplasmic. Residues isoleucine 36–glutamate 56 traverse the membrane as a helical segment. Topologically, residues glutamine 57–threonine 75 are extracellular. The helical transmembrane segment at alanine 76 to alanine 96 threads the bilayer. Topologically, residues glutamate 97–leucine 120 are cytoplasmic. Residues phenylalanine 121–isoleucine 141 form a helical membrane-spanning segment. Over cysteine 142–alanine 155 the chain is Extracellular. The helical transmembrane segment at glycine 156–valine 176 threads the bilayer. The Cytoplasmic segment spans residues aspartate 177 to serine 195. The helical transmembrane segment at tryptophan 196 to leucine 216 threads the bilayer. The Extracellular segment spans residues arginine 217–serine 233. A helical membrane pass occupies residues leucine 234 to proline 254. Topologically, residues threonine 255 to valine 289 are cytoplasmic. A helical membrane pass occupies residues proline 290 to phenylalanine 310. Residues aspartate 311–leucine 337 are Extracellular-facing. The helical transmembrane segment at leucine 338–isoleucine 358 threads the bilayer. Residues proline 359–alanine 480 lie on the Cytoplasmic side of the membrane. A helical transmembrane segment spans residues methionine 481 to isoleucine 501. Residues glutamate 502–cysteine 557 are Extracellular-facing. Residues phenylalanine 558–isoleucine 578 form a helical membrane-spanning segment. Topologically, residues proline 579 to lysine 703 are cytoplasmic. The interval glutamate 678–lysine 703 is disordered.

The protein belongs to the anion exchanger (TC 2.A.31.3) family.

The protein resides in the membrane. Functionally, probable boron transporter. Boron is essential for maintaining the integrity of plants cell walls. This Arabidopsis thaliana (Mouse-ear cress) protein is Probable boron transporter 2 (BOR2).